Here is a 289-residue protein sequence, read N- to C-terminus: Shikimate kinase (289 aa).

An ATP-binding site is contributed by 84-94 (PMASGLSSSSA).

It belongs to the GHMP kinase family. Archaeal shikimate kinase subfamily.

The protein localises to the cytoplasm. It carries out the reaction shikimate + ATP = 3-phosphoshikimate + ADP + H(+). The protein operates within metabolic intermediate biosynthesis; chorismate biosynthesis; chorismate from D-erythrose 4-phosphate and phosphoenolpyruvate: step 5/7. This Methanobrevibacter smithii (strain ATCC 35061 / DSM 861 / OCM 144 / PS) protein is Shikimate kinase.